The sequence spans 587 residues: Nucleoporin p58/p45 (587 aa).

5 tandem repeats follow at residues 7–8 (FG), 30–31 (FG), 44–45 (FG), 63–64 (FG), and 68–69 (FG). The segment at 7–567 (FGSGTLGSTT…VSNPASAGFG (561 aa)) is 14 X 2 AA repeats of F-G. Residues 196–236 (TSAASNEGLGGIDFSTSSDKKSDKTGTRPEDSKALKDENLP) are disordered. Positions 213 to 234 (SDKKSDKTGTRPEDSKALKDEN) are enriched in basic and acidic residues. Coiled coils occupy residues 244-264 (ENLQ…SRMS) and 302-369 (ETAQ…SHIT). Thr319 carries the post-translational modification Phosphothreonine. A run of 9 repeats spans residues 476 to 477 (FG), 480 to 481 (FG), 501 to 502 (FG), 507 to 508 (FG), 517 to 518 (FG), 519 to 520 (FG), 533 to 534 (FG), 556 to 557 (FG), and 566 to 567 (FG). The disordered stretch occupies residues 565–587 (GFGTGGQLLQLKRPPAGNKRGKR).

It belongs to the NUP58 family. In terms of assembly, component of the p62 complex, a complex at least composed of NUP62, NUP54, and NUP58. Interacts with NUTF2. Interacts with SRP1-alpha and Importin p97 proteins when they are together, but not with SRP1-alpha protein alone. Post-translationally, O-glycosylated.

It is found in the nucleus. Its subcellular location is the nuclear pore complex. The protein localises to the nucleus membrane. In terms of biological role, component of the nuclear pore complex, a complex required for the trafficking across the nuclear membrane. This is Nucleoporin p58/p45 from Mus musculus (Mouse).